Here is a 103-residue protein sequence, read N- to C-terminus: Large ribosomal subunit protein eL43 (103 aa).

Belongs to the eukaryotic ribosomal protein eL43 family.

The protein is Large ribosomal subunit protein eL43 (RPL37A) of Tetrahymena thermophila (strain SB210).